A 137-amino-acid chain; its full sequence is Peptide methionine sulfoxide reductase MsrB (137 aa).

Residues 7-129 (PTENIEKLSD…NSASLNFVDD (123 aa)) enclose the MsrB domain. Zn(2+)-binding residues include cysteine 46, cysteine 49, cysteine 95, and cysteine 98. Cysteine 118 serves as the catalytic Nucleophile.

It belongs to the MsrB Met sulfoxide reductase family. It depends on Zn(2+) as a cofactor.

The enzyme catalyses L-methionyl-[protein] + [thioredoxin]-disulfide + H2O = L-methionyl-(R)-S-oxide-[protein] + [thioredoxin]-dithiol. This is Peptide methionine sulfoxide reductase MsrB from Yersinia pseudotuberculosis serotype O:1b (strain IP 31758).